Here is a 323-residue protein sequence, read N- to C-terminus: Cell division protein ZipA (323 aa).

Topologically, residues 1–4 (MDLN) are periplasmic. The helical transmembrane segment at 5–25 (TILIILGIIALIILVVHGLWA) threads the bilayer. Topologically, residues 26-323 (NRREKSQYFK…AEKAYLDKVR (298 aa)) are cytoplasmic. Positions 44–73 (SRLREPPAHIQSASEEKKDANTSTPTAEVS) are disordered.

The protein belongs to the ZipA family. As to quaternary structure, interacts with FtsZ via their C-terminal domains.

It localises to the cell inner membrane. Its function is as follows. Essential cell division protein that stabilizes the FtsZ protofilaments by cross-linking them and that serves as a cytoplasmic membrane anchor for the Z ring. Also required for the recruitment to the septal ring of downstream cell division proteins. The sequence is that of Cell division protein ZipA from Pasteurella multocida (strain Pm70).